Consider the following 113-residue polypeptide: U11-theraphotoxin-Hhn1q (113 aa).

A signal peptide spans Met1–Ala21. Residues Asp22–Arg74 constitute a propeptide that is removed on maturation. The disordered stretch occupies residues Glu61–Cys82. Disulfide bonds link Cys75–Cys90, Cys82–Cys95, and Cys89–Cys110.

This sequence belongs to the neurotoxin 14 (magi-1) family. 01 (HNTX-16) subfamily. Expressed by the venom gland.

The protein localises to the secreted. In terms of biological role, probable ion channel inhibitor. The chain is U11-theraphotoxin-Hhn1q from Cyriopagopus hainanus (Chinese bird spider).